The chain runs to 66 residues: U10-theraphotoxin-Cg1a 1 (66 aa).

A signal peptide spans 1–21 (MKTSVLFVIFGLALLFCLSFA). A propeptide spanning residues 22–29 (AELEDTGR) is cleaved from the precursor. 3 disulfides stabilise this stretch: Cys31/Cys46, Cys38/Cys51, and Cys45/Cys58.

This sequence belongs to the neurotoxin 10 (Hwtx-1) family. 29 (Jztx-13) subfamily. Expressed by the venom gland.

It is found in the secreted. Functionally, probable ion channel inhibitor. The polypeptide is U10-theraphotoxin-Cg1a 1 (Chilobrachys guangxiensis (Chinese earth tiger tarantula)).